The primary structure comprises 628 residues: tRNA uridine 5-carboxymethylaminomethyl modification enzyme MnmG (628 aa).

13–18 (GAGHAG) is a binding site for FAD. An NAD(+)-binding site is contributed by 273 to 287 (GPRYCPSIEDKIVRF).

This sequence belongs to the MnmG family. Homodimer. Heterotetramer of two MnmE and two MnmG subunits. FAD is required as a cofactor.

The protein resides in the cytoplasm. Its function is as follows. NAD-binding protein involved in the addition of a carboxymethylaminomethyl (cmnm) group at the wobble position (U34) of certain tRNAs, forming tRNA-cmnm(5)s(2)U34. The polypeptide is tRNA uridine 5-carboxymethylaminomethyl modification enzyme MnmG (Buchnera aphidicola subsp. Acyrthosiphon pisum (strain APS) (Acyrthosiphon pisum symbiotic bacterium)).